The chain runs to 62 residues: Photosystem II reaction center protein Z (62 aa).

Transmembrane regions (helical) follow at residues 8-28 (AVFA…VVFA) and 41-61 (FSGT…NSLI).

It belongs to the PsbZ family. In terms of assembly, PSII is composed of 1 copy each of membrane proteins PsbA, PsbB, PsbC, PsbD, PsbE, PsbF, PsbH, PsbI, PsbJ, PsbK, PsbL, PsbM, PsbT, PsbY, PsbZ, Psb30/Ycf12, at least 3 peripheral proteins of the oxygen-evolving complex and a large number of cofactors. It forms dimeric complexes.

It is found in the plastid. It localises to the chloroplast thylakoid membrane. Its function is as follows. May control the interaction of photosystem II (PSII) cores with the light-harvesting antenna, regulates electron flow through the 2 photosystem reaction centers. PSII is a light-driven water plastoquinone oxidoreductase, using light energy to abstract electrons from H(2)O, generating a proton gradient subsequently used for ATP formation. The polypeptide is Photosystem II reaction center protein Z (Citrus sinensis (Sweet orange)).